Here is a 243-residue protein sequence, read N- to C-terminus: Anti-sigma-K factor RskA (243 aa).

The Cytoplasmic portion of the chain corresponds to 1 to 102 (MTEPNNTDLL…RGGESRWRTA (102 aa)). Residues 103–123 (VLAAAAVAVVGLGALGVGLAL) form a helical membrane-spanning segment. At 124–243 (RPAVSPTTAD…SPAFAELPLT (120 aa)) the chain is on the extracellular side. The tract at residues 223–243 (VEPPGGSQRPTSPAFAELPLT) is disordered.

The protein belongs to the anti-sigma-K factor family.

Its subcellular location is the cell membrane. Functionally, an anti-sigma factor for extracytoplasmic function (ECF) sigma factor SigK. ECF sigma factors are held in an inactive form by an anti-sigma factor until released by regulated intramembrane proteolysis (RIP). RIP occurs when an extracytoplasmic signal triggers a concerted proteolytic cascade to transmit information and elicit cellular responses. The membrane-spanning regulatory substrate protein is first cut extracytoplasmically (site-1 protease, S1P), then within the membrane itself (site-2 protease, S2P, Rip1), while cytoplasmic proteases finish degrading the regulatory protein, liberating the sigma factor. This is Anti-sigma-K factor RskA (rskA) from Mycobacterium sp. (strain JLS).